A 582-amino-acid chain; its full sequence is Hemagglutinin-neuraminidase (582 aa).

Topologically, residues 1–34 (MEPSKLFTMSDNATFAPGPVVNAADKKTFRTCFR) are intravirion. The chain crosses the membrane as a helical span at residues 35-55 (ILVLSVQAVTLILVIVTLGEL). Residues 56-582 (VRMINDQGLS…LPVLTRLTIT (527 aa)) lie on the Virion surface side of the membrane. Cystine bridges form between Cys-178/Cys-202, Cys-192/Cys-253, and Cys-244/Cys-257. Residues Asn-284 and Asn-329 are each glycosylated (N-linked (GlcNAc...) asparagine; by host). 3 disulfides stabilise this stretch: Cys-350/Cys-471, Cys-382/Cys-392, and Cys-465/Cys-475. Residues Asn-400 and Asn-448 are each glycosylated (N-linked (GlcNAc...) asparagine; by host). An N-linked (GlcNAc...) asparagine; by host glycan is attached at Asn-507. A disulfide bridge links Cys-545 with Cys-556.

It belongs to the paramyxoviruses hemagglutinin-neuraminidase family. As to quaternary structure, homotetramer; composed of disulfide-linked homodimers. Interacts with F protein trimer.

It localises to the virion membrane. Its subcellular location is the host cell membrane. The enzyme catalyses Hydrolysis of alpha-(2-&gt;3)-, alpha-(2-&gt;6)-, alpha-(2-&gt;8)- glycosidic linkages of terminal sialic acid residues in oligosaccharides, glycoproteins, glycolipids, colominic acid and synthetic substrates.. Its function is as follows. Attaches the virus to alpha-2,3-linked sialic acid-containing cell receptors and thereby initiating infection. Binding of HN protein to the receptor induces a conformational change that allows the F protein to trigger virion/cell membranes fusion. Binds to the glycan motifs sialyl Lewis (SLe) and GM2 ganglioside (GM2-glycan). Neuraminidase activity ensures the efficient spread of the virus by dissociating the mature virions from the neuraminic acid containing glycoproteins. In Mumps orthorubulavirus (MuV), this protein is Hemagglutinin-neuraminidase.